We begin with the raw amino-acid sequence, 327 residues long: UDP-glucose 4-epimerase (327 aa).

T119 provides a ligand contact to substrate. The active-site Proton acceptor is the Y143.

This sequence belongs to the NAD(P)-dependent epimerase/dehydratase family. It depends on NAD(+) as a cofactor.

It catalyses the reaction UDP-alpha-D-glucose = UDP-alpha-D-galactose. It participates in carbohydrate metabolism; galactose metabolism. Its pathway is glycan metabolism; exopolysaccharide biosynthesis. This Rhizobium leguminosarum bv. trifolii protein is UDP-glucose 4-epimerase (exoB).